Consider the following 405-residue polypeptide: Imidazolonepropionase (405 aa).

Residues histidine 73 and histidine 75 each contribute to the Fe(3+) site. Zn(2+) is bound by residues histidine 73 and histidine 75. 3 residues coordinate 4-imidazolone-5-propanoate: arginine 82, tyrosine 145, and histidine 178. N-formimidoyl-L-glutamate is bound at residue tyrosine 145. Histidine 243 serves as a coordination point for Fe(3+). Histidine 243 contributes to the Zn(2+) binding site. A 4-imidazolone-5-propanoate-binding site is contributed by glutamine 246. Aspartate 318 is a binding site for Fe(3+). Aspartate 318 serves as a coordination point for Zn(2+). Positions 320 and 322 each coordinate N-formimidoyl-L-glutamate. Residue threonine 323 participates in 4-imidazolone-5-propanoate binding.

This sequence belongs to the metallo-dependent hydrolases superfamily. HutI family. Zn(2+) serves as cofactor. Requires Fe(3+) as cofactor.

Its subcellular location is the cytoplasm. It catalyses the reaction 4-imidazolone-5-propanoate + H2O = N-formimidoyl-L-glutamate. It functions in the pathway amino-acid degradation; L-histidine degradation into L-glutamate; N-formimidoyl-L-glutamate from L-histidine: step 3/3. In terms of biological role, catalyzes the hydrolytic cleavage of the carbon-nitrogen bond in imidazolone-5-propanoate to yield N-formimidoyl-L-glutamate. It is the third step in the universal histidine degradation pathway. The chain is Imidazolonepropionase from Brucella suis biovar 1 (strain 1330).